The chain runs to 745 residues: uncharacterized protein (745 aa).

Residues 158–256 form the HTH araC/xylS-type domain; it reads NQVCDYIELH…HQTPKQYRGD (99 aa). 2 DNA-binding regions (H-T-H motif) span residues 175–196 and 223–246; these read SELSEYVGWSESHLSKKFAESL and ITDIALQNGFSSAASFARTFKHIT.

This is an uncharacterized protein from Staphylococcus aureus.